The following is a 764-amino-acid chain: Ergosteryl-beta-glucosidase (764 aa).

Glu-515 (nucleophile) is an active-site residue. The segment at 588–629 (HDTRAKTPTPEPSPASTVASVSTSTSKSGSSQPPSFIKPDNH) is disordered. Position 594 is a phosphothreonine (Thr-594). The segment covering 601 to 622 (PASTVASVSTSTSKSGSSQPPS) has biased composition (low complexity).

Belongs to the glycosyl hydrolase 5 (cellulase A) family.

The protein localises to the cytoplasm. Its subcellular location is the cytosol. It is found in the vacuole membrane. The enzyme catalyses ergosteryl 3-beta-D-glucoside + H2O = ergosterol + D-glucose. Functionally, ergosteryl beta-glucosidase involved in the ergosteryl beta-glucoside (EG) catabolic pathway and vacuole formation via hydrolysis of EG to generate glucose. Is also able to hydrolyze cholesteryl beta-glucoside and sitosteryl beta-glucoside to generate glucose; and C6-7-nitro-2,1,3-benzoxadiazole (NBD)-GlcCer to generate C6-NBD-ceramide (Cer). The chain is Ergosteryl-beta-glucosidase from Saccharomyces cerevisiae (strain ATCC 204508 / S288c) (Baker's yeast).